The following is a 467-amino-acid chain: Chromosomal replication initiator protein DnaA (467 aa).

Positions 1-84 (MDISLDQLWD…LQVEFSVSPH (84 aa)) are domain I, interacts with DnaA modulators. The domain II stretch occupies residues 84-125 (HASVEAEPPSRAISPTSGRAGSLPASTTLGLEVGGSLPMRAP). The interval 89–108 (AEPPSRAISPTSGRAGSLPA) is disordered. Positions 96–108 (ISPTSGRAGSLPA) are enriched in polar residues. Residues 126–342 (DLNPKYSFSR…GALIRAVAYV (217 aa)) form a domain III, AAA+ region region. ATP-binding residues include glycine 170, glycine 172, lysine 173, and threonine 174. Residues 343-467 (SISGLPMSVE…LRVVANSRSS (125 aa)) form a domain IV, binds dsDNA region.

The protein belongs to the DnaA family. Oligomerizes as a right-handed, spiral filament on DNA at oriC.

The protein localises to the cytoplasm. Plays an essential role in the initiation and regulation of chromosomal replication. ATP-DnaA binds to the origin of replication (oriC) to initiate formation of the DNA replication initiation complex once per cell cycle. Binds the DnaA box (a 9 base pair repeat at the origin) and separates the double-stranded (ds)DNA. Forms a right-handed helical filament on oriC DNA; dsDNA binds to the exterior of the filament while single-stranded (ss)DNA is stabiized in the filament's interior. The ATP-DnaA-oriC complex binds and stabilizes one strand of the AT-rich DNA unwinding element (DUE), permitting loading of DNA polymerase. After initiation quickly degrades to an ADP-DnaA complex that is not apt for DNA replication. Binds acidic phospholipids. This Synechococcus sp. (strain JA-2-3B'a(2-13)) (Cyanobacteria bacterium Yellowstone B-Prime) protein is Chromosomal replication initiator protein DnaA.